A 132-amino-acid polypeptide reads, in one-letter code: Ribosome-binding factor A (132 aa).

Belongs to the RbfA family. As to quaternary structure, monomer. Binds 30S ribosomal subunits, but not 50S ribosomal subunits or 70S ribosomes.

It is found in the cytoplasm. Functionally, one of several proteins that assist in the late maturation steps of the functional core of the 30S ribosomal subunit. Associates with free 30S ribosomal subunits (but not with 30S subunits that are part of 70S ribosomes or polysomes). Required for efficient processing of 16S rRNA. May interact with the 5'-terminal helix region of 16S rRNA. This is Ribosome-binding factor A from Pseudomonas putida (strain ATCC 700007 / DSM 6899 / JCM 31910 / BCRC 17059 / LMG 24140 / F1).